A 348-amino-acid chain; its full sequence is Alanine racemase (348 aa).

Lysine 34 acts as the Proton acceptor; specific for D-alanine in catalysis. Position 34 is an N6-(pyridoxal phosphate)lysine (lysine 34). Residue arginine 127 participates in substrate binding. Tyrosine 243 serves as the catalytic Proton acceptor; specific for L-alanine. Methionine 291 contacts substrate.

This sequence belongs to the alanine racemase family. Requires pyridoxal 5'-phosphate as cofactor.

It carries out the reaction L-alanine = D-alanine. The protein operates within amino-acid biosynthesis; D-alanine biosynthesis; D-alanine from L-alanine: step 1/1. Its function is as follows. Catalyzes the interconversion of L-alanine and D-alanine. May also act on other amino acids. In Coprothermobacter proteolyticus (strain ATCC 35245 / DSM 5265 / OCM 4 / BT), this protein is Alanine racemase (alr).